Consider the following 129-residue polypeptide: Small ribosomal subunit protein uS11 (129 aa).

Belongs to the universal ribosomal protein uS11 family. In terms of assembly, part of the 30S ribosomal subunit. Interacts with proteins S7 and S18. Binds to IF-3.

Located on the platform of the 30S subunit, it bridges several disparate RNA helices of the 16S rRNA. Forms part of the Shine-Dalgarno cleft in the 70S ribosome. The protein is Small ribosomal subunit protein uS11 of Geobacillus thermodenitrificans (strain NG80-2).